Consider the following 520-residue polypeptide: Dynein axonemal assembly factor 8 (520 aa).

Disordered regions lie at residues 93–202 (PVLV…LRQE), 217–256 (RDAC…EGPP), 328–366 (CARK…QLAQ), and 388–520 (DHLS…LEQL). Over residues 111–125 (RTKDASSQEGRDPGR) the composition is skewed to basic and acidic residues. Ser-161 is subject to Phosphoserine. The residue at position 351 (Ser-351) is a Phosphoserine. A compositionally biased stretch (acidic residues) spans 401 to 410 (DSEEEEEEEM). Residues 420-437 (SPSSLGLRTCTGKSQLLQ) show a composition bias toward polar residues.

Expressed in respiratory ciliated cells (at protein level).

It localises to the dynein axonemal particle. The protein localises to the cytoplasm. Functionally, in cyliated cells, dynein axonemal particle-specific protein required for deployment of ODA to the axoneme. Interacts with outer dynein arm (ODA) subunits. This is Dynein axonemal assembly factor 8 from Homo sapiens (Human).